The sequence spans 153 residues: Heavy metal-associated isoprenylated plant protein 25 (153 aa).

In terms of domain architecture, HMA spans 24-88; it reads LQTVDVRVLI…IIHRTGKRAE (65 aa). Residues Cys35 and Cys38 each contribute to the a metal cation site. At Cys150 the chain carries Cysteine methyl ester. Residue Cys150 is the site of S-farnesyl cysteine attachment. A propeptide spans 151–153 (removed in mature form); it reads VVM.

The protein belongs to the HIPP family. Expressed in roots, shoot apical meristem, trichomes and flower buds.

It localises to the membrane. Heavy-metal-binding protein. Binds cadmium. May be involved in cadmium transport and play a role in cadmium detoxification. The protein is Heavy metal-associated isoprenylated plant protein 25 of Arabidopsis thaliana (Mouse-ear cress).